The primary structure comprises 439 residues: Enolase (439 aa).

Gln163 serves as a coordination point for (2R)-2-phosphoglycerate. The Proton donor role is filled by Glu205. Mg(2+)-binding residues include Asp242, Glu287, and Asp314. Positions 339, 368, 369, and 390 each coordinate (2R)-2-phosphoglycerate. Lys339 functions as the Proton acceptor in the catalytic mechanism.

It belongs to the enolase family. Mg(2+) serves as cofactor.

It is found in the cytoplasm. It localises to the secreted. Its subcellular location is the cell surface. The enzyme catalyses (2R)-2-phosphoglycerate = phosphoenolpyruvate + H2O. Its pathway is carbohydrate degradation; glycolysis; pyruvate from D-glyceraldehyde 3-phosphate: step 4/5. Catalyzes the reversible conversion of 2-phosphoglycerate (2-PG) into phosphoenolpyruvate (PEP). It is essential for the degradation of carbohydrates via glycolysis. In Levilactobacillus brevis (strain ATCC 367 / BCRC 12310 / CIP 105137 / JCM 1170 / LMG 11437 / NCIMB 947 / NCTC 947) (Lactobacillus brevis), this protein is Enolase.